The sequence spans 696 residues: Elongation factor G (696 aa).

In terms of domain architecture, tr-type G spans 8 to 286 (EDVRNIGIAA…AVVHYLPSPV (279 aa)). Residues 17 to 24 (AHIDAGKT), 81 to 85 (DTPGH), and 135 to 138 (NKMD) contribute to the GTP site.

The protein belongs to the TRAFAC class translation factor GTPase superfamily. Classic translation factor GTPase family. EF-G/EF-2 subfamily.

Its subcellular location is the cytoplasm. Catalyzes the GTP-dependent ribosomal translocation step during translation elongation. During this step, the ribosome changes from the pre-translocational (PRE) to the post-translocational (POST) state as the newly formed A-site-bound peptidyl-tRNA and P-site-bound deacylated tRNA move to the P and E sites, respectively. Catalyzes the coordinated movement of the two tRNA molecules, the mRNA and conformational changes in the ribosome. The chain is Elongation factor G from Sulfurovum sp. (strain NBC37-1).